Here is a 116-residue protein sequence, read N- to C-terminus: Large ribosomal subunit protein uL18 (116 aa).

The protein belongs to the universal ribosomal protein uL18 family. As to quaternary structure, part of the 50S ribosomal subunit; part of the 5S rRNA/L5/L18/L25 subcomplex. Contacts the 5S and 23S rRNAs.

This is one of the proteins that bind and probably mediate the attachment of the 5S RNA into the large ribosomal subunit, where it forms part of the central protuberance. In Shewanella woodyi (strain ATCC 51908 / MS32), this protein is Large ribosomal subunit protein uL18.